The sequence spans 743 residues: Dolichyl-phosphate-mannose--protein mannosyltransferase 5 (743 aa).

Over 1-46 the chain is Lumenal; the sequence is MNKEHLLKVDPIPDVTIKRGPLRSFLITKPCDNLSSLRTVTSSKEK. N33 carries an N-linked (GlcNAc...) asparagine glycan. A helical membrane pass occupies residues 47-67; that stretch reads LLVGCLLIFTAIVRLHNISLP. At 68-129 the chain is on the cytoplasmic side; that stretch reads NSVVFGENEV…IGTEYTANVP (62 aa). The helical transmembrane segment at 130–150 threads the bilayer; it reads YVAMRFFSATLGIVSVLVLYL. Residues 151–158 are Lumenal-facing; sequence TLRVSGVK. A helical membrane pass occupies residues 159-179; the sequence is IAVAAICAVCFAIENSFVTLS. Residue R180 is a topological domain, cytoplasmic. Residues 181–201 traverse the membrane as a helical segment; that stretch reads FTLIEGPFVFFMACAVYFFRR. Residues 202–231 lie on the Lumenal side of the membrane; that stretch reads SELYLPNSCKANKSLLAASIALGFAVSSKW. N-linked (GlcNAc...) asparagine glycosylation occurs at N213. The helical transmembrane segment at 232-252 threads the bilayer; that stretch reads AGLFTIAWAGIIVLWRVWFMI. Over 253–264 the chain is Cytoplasmic; sequence GDLSRPIGSSIK. Residues 265 to 285 traverse the membrane as a helical segment; that stretch reads YMAFQFTCLLAIPAFIYFLIF. Residues 286–583 lie on the Lumenal side of the membrane; it reads SVHIKTLNVN…GREVYFLGNA (298 aa). An MIR 1 domain is found at 320-374; sequence VAEVAVGSAVSLNHVGTAGGYLHSHLHNYPAGSMQQQVTLYPHIDQNNKWIIELA. N380 and N386 each carry an N-linked (GlcNAc...) asparagine glycan. 2 consecutive MIR domains span residues 384–444 and 454–510; these read FQNL…IEID and QEHI…IEEN. Residues 584–604 traverse the membrane as a helical segment; that stretch reads VLWWSVTAFICTFIIGVAVEL. Residues 605 to 623 lie on the Cytoplasmic side of the membrane; that stretch reads LAWKLGVNILRDKHIINFH. A helical transmembrane segment spans residues 624–644; it reads YQVFQYLLGFAAHYFPYFFVG. Over 645 to 646 the chain is Lumenal; sequence QK. A helical transmembrane segment spans residues 647 to 667; that stretch reads LFLYDYLPAYYFGILAFGHAL. The Cytoplasmic segment spans residues 668-683; the sequence is DLISTYISNKRNNTGY. Residues 684–704 form a helical membrane-spanning segment; sequence IVVAIFMVVCFYFFSEHSPLI. Topologically, residues 705–743 are lumenal; the sequence is YATGWSSNLCKRSKWLGSWDFYCNSLLLSDSHYELNAES.

This sequence belongs to the glycosyltransferase 39 family. PMT3 and PMT5 form a functional heterodimer. Also forms a minor complex with PMT2.

The protein localises to the endoplasmic reticulum membrane. It carries out the reaction a di-trans,poly-cis-dolichyl beta-D-mannosyl phosphate + L-seryl-[protein] = 3-O-(alpha-D-mannosyl)-L-seryl-[protein] + a di-trans,poly-cis-dolichyl phosphate + H(+). The enzyme catalyses a di-trans,poly-cis-dolichyl beta-D-mannosyl phosphate + L-threonyl-[protein] = 3-O-(alpha-D-mannosyl)-L-threonyl-[protein] + a di-trans,poly-cis-dolichyl phosphate + H(+). The protein operates within protein modification; protein glycosylation. In terms of biological role, protein O-mannosyltransferase involved in O-glycosylation which is essential for cell wall rigidity. Forms a heterodimeric complex with PMT3 and more rarely with PMT2 to transfer mannose from Dol-P-mannose to Ser or Thr residues on proteins. In Saccharomyces cerevisiae (strain ATCC 204508 / S288c) (Baker's yeast), this protein is Dolichyl-phosphate-mannose--protein mannosyltransferase 5.